The sequence spans 287 residues: Eukaryotic translation initiation factor 3 subunit G (287 aa).

Disordered regions lie at residues 1–34 and 159–184; these read MSKLANRADWADDEEFDDPSALPAQQVTTNKDGT and TAGGAGEDDEAAAGAVGTGSGSYVPP. Residues 207–285 form the RRM domain; sequence ATLRVTNVSE…LILRVEFAKR (79 aa).

It belongs to the eIF-3 subunit G family. Component of the eukaryotic translation initiation factor 3 (eIF-3) complex.

It is found in the cytoplasm. Functionally, RNA-binding component of the eukaryotic translation initiation factor 3 (eIF-3) complex, which is involved in protein synthesis of a specialized repertoire of mRNAs and, together with other initiation factors, stimulates binding of mRNA and methionyl-tRNAi to the 40S ribosome. The eIF-3 complex specifically targets and initiates translation of a subset of mRNAs involved in cell proliferation. This subunit can bind 18S rRNA. This Aspergillus oryzae (strain ATCC 42149 / RIB 40) (Yellow koji mold) protein is Eukaryotic translation initiation factor 3 subunit G (tif35).